We begin with the raw amino-acid sequence, 249 residues long: Cysteine-rich secretory protein 1 (249 aa).

An N-terminal signal peptide occupies residues M1–S20. Positions V45 to Y175 constitute an SCP domain. N-linked (GlcNAc...) asparagine glycosylation is present at N104. Disulfide bonds link C195–C202, C198–C207, C211–C244, C220–C238, and C229–C242. The ShKT domain maps to C211 to C244. N-linked (GlcNAc...) asparagine glycosylation occurs at N230.

Belongs to the CRISP family. As to expression, expressed in all the regions of the epididymis except the caput and is not detected in the testis, prostate, seminal vesicle, and brain.

Functionally, may have a role in sperm-egg fusion and maturation. In Macaca mulatta (Rhesus macaque), this protein is Cysteine-rich secretory protein 1 (CRISP1).